The primary structure comprises 249 residues: tRNA pseudouridine synthase A (249 aa).

Aspartate 53 functions as the Nucleophile in the catalytic mechanism. Tyrosine 111 contributes to the substrate binding site.

It belongs to the tRNA pseudouridine synthase TruA family. As to quaternary structure, homodimer.

The enzyme catalyses uridine(38/39/40) in tRNA = pseudouridine(38/39/40) in tRNA. Formation of pseudouridine at positions 38, 39 and 40 in the anticodon stem and loop of transfer RNAs. The chain is tRNA pseudouridine synthase A from Streptococcus pneumoniae (strain Taiwan19F-14).